Here is a 494-residue protein sequence, read N- to C-terminus: UPF0371 protein STER_1332 (494 aa).

It belongs to the UPF0371 family.

This is UPF0371 protein STER_1332 from Streptococcus thermophilus (strain ATCC BAA-491 / LMD-9).